Reading from the N-terminus, the 220-residue chain is Ribosomal RNA large subunit methyltransferase E (220 aa).

Residues Gly-64, Trp-66, Asp-84, Asp-100, and Asp-125 each contribute to the S-adenosyl-L-methionine site. Lys-165 acts as the Proton acceptor in catalysis.

Belongs to the class I-like SAM-binding methyltransferase superfamily. RNA methyltransferase RlmE family.

It localises to the cytoplasm. The catalysed reaction is uridine(2552) in 23S rRNA + S-adenosyl-L-methionine = 2'-O-methyluridine(2552) in 23S rRNA + S-adenosyl-L-homocysteine + H(+). Functionally, specifically methylates the uridine in position 2552 of 23S rRNA at the 2'-O position of the ribose in the fully assembled 50S ribosomal subunit. This chain is Ribosomal RNA large subunit methyltransferase E, found in Thiobacillus denitrificans (strain ATCC 25259 / T1).